The primary structure comprises 258 residues: Venom plasminogen activator (258 aa).

The N-terminal stretch at 1–18 (MVLIRVLANLLILQLSYA) is a signal peptide. Positions 19–24 (QKSSEL) are excised as a propeptide. The Peptidase S1 domain occupies 25–249 (VVGGDECNIN…YTDWIQSIIS (225 aa)). Disulfide bonds link C31–C163, C50–C66, C98–C256, C142–C210, C174–C189, and C200–C225. N-linked (GlcNAc...) asparagine glycosylation occurs at N44. Catalysis depends on charge relay system residues H65 and D110. Catalysis depends on S204, which acts as the Charge relay system.

This sequence belongs to the peptidase S1 family. Snake venom subfamily. Monomer. As to expression, expressed by the venom gland.

It localises to the secreted. Snake venom serine protease that activates plasminogen. Shows a preferential cleavage at Arg-|-Xaa instead of Lys-|-Xaa bonds. The protein is Venom plasminogen activator of Agkistrodon piscivorus leucostoma (Western cottonmouth).